Reading from the N-terminus, the 91-residue chain is Non-specific lipid-transfer protein 1 (91 aa).

4 cysteine pairs are disulfide-bonded: cysteine 3/cysteine 50, cysteine 13/cysteine 27, cysteine 28/cysteine 73, and cysteine 48/cysteine 87.

Belongs to the plant LTP family.

Its function is as follows. Plant non-specific lipid-transfer proteins transfer phospholipids as well as galactolipids across membranes. May play a role in wax or cutin deposition in the cell walls of expanding epidermal cells and certain secretory tissues. The polypeptide is Non-specific lipid-transfer protein 1 (Morus nigra (Black mulberry)).